We begin with the raw amino-acid sequence, 352 residues long: uncharacterized protein (352 aa).

The signal sequence occupies residues 1-22 (MIFKKTILIFIISFFFISISFA). Over residues 25–47 (SSSSSSSSSSSSSSWSSSESSSS) the composition is skewed to low complexity. Residues 25-49 (SSSSSSSSSSSSSSWSSSESSSSPA) are disordered. N-linked (GlcNAc...) asparagine glycans are attached at residues asparagine 76, asparagine 110, asparagine 182, asparagine 212, and asparagine 223.

The protein resides in the secreted. This is an uncharacterized protein from Dictyostelium discoideum (Social amoeba).